A 272-amino-acid polypeptide reads, in one-letter code: MNSDSSSVSSRASSPDMDEMYLRDHHHRHHHHQESRLNSVSSTQGDMMQKMPGESLSRAGAKAAGESSKYKIKKQLSEQDLQQLRLKINGRERKRMHDLNLAMDGLREVMPYAHGPSVRKLSKIATLLLARNYILMLTSSLEEMKRLVGEIYGGHHSAFHCGTVGHSAGHPAHAANSVHPVHPILGGALSSGNASSPLSAASLPAIGTIRPPHSLLKAPSTPPALQLGSGFQHWAGLPCPCTICQMPPPPHLSALSTANMARLSAESKDLLK.

Low complexity predominate over residues 1 to 14 (MNSDSSSVSSRASS). Residues 1 to 71 (MNSDSSSVSS…KAAGESSKYK (71 aa)) are disordered. The segment covering 24–33 (DHHHRHHHHQ) has biased composition (basic residues). A compositionally biased stretch (polar residues) spans 36–46 (RLNSVSSTQGD). Residues 68-89 (SKYKIKKQLSEQDLQQLRLKIN) adopt a coiled-coil conformation. The 55-residue stretch at 83-137 (QLRLKINGRERKRMHDLNLAMDGLREVMPYAHGPSVRKLSKIATLLLARNYILML) folds into the bHLH domain.

The protein localises to the nucleus. Its function is as follows. May determine the distinct specification program of class A neurons in the dorsal part of the spinal cord and suppress specification of class B neurons. This is Oligodendrocyte transcription factor 3 (OLIG3) from Homo sapiens (Human).